Here is a 239-residue protein sequence, read N- to C-terminus: Ribonuclease HII (239 aa).

The 192-residue stretch at Gly-30–Gly-221 folds into the RNase H type-2 domain. Residues Asp-36, Glu-37, and Asp-130 each coordinate a divalent metal cation.

Belongs to the RNase HII family. Requires Mn(2+) as cofactor. It depends on Mg(2+) as a cofactor.

Its subcellular location is the cytoplasm. The enzyme catalyses Endonucleolytic cleavage to 5'-phosphomonoester.. Endonuclease that specifically degrades the RNA of RNA-DNA hybrids. The chain is Ribonuclease HII from Mycolicibacterium paratuberculosis (strain ATCC BAA-968 / K-10) (Mycobacterium paratuberculosis).